An 806-amino-acid chain; its full sequence is Zygotic DNA replication licensing factor mcm3 (806 aa).

The region spanning 295–502 (VFEQLSRSLA…HDREISDHVL (208 aa)) is the MCM domain. ATP is bound at residue 345 to 352 (GDPSVAKS). The Arginine finger signature appears at 477-480 (SRFD). Residues 662–738 (KKRRRREGES…TDSSAKPGLS (77 aa)) are disordered. Positions 693–702 (AQDGESHDPY) are enriched in basic and acidic residues.

It belongs to the MCM family. Component of the mcm2-7 complex (RLF-M). The complex forms a toroidal hexameric ring with the proposed subunit order mcm2-mcm6-mcm4-mcm7-mcm3-mcm5. Begins to associate with zmcm6 into mcm complexes at the neurula stage. Component of the CMG helicase complex, composed of the mcm2-7 complex, the GINS complex and cdc45.

The protein resides in the nucleus. It localises to the chromosome. It carries out the reaction ATP + H2O = ADP + phosphate + H(+). In terms of biological role, acts as a component of the mcm2-7 complex (mcm complex) which is the putative replicative helicase essential for 'once per cell cycle' DNA replication initiation and elongation in eukaryotic cells. The active ATPase sites in the mcm2-7 ring are formed through the interaction surfaces of two neighboring subunits such that a critical structure of a conserved arginine finger motif is provided in trans relative to the ATP-binding site of the Walker A box of the adjacent subunit. The six ATPase active sites, however, are likely to contribute differentially to the complex helicase activity. The existence of maternal and zygotic forms of mcm3 and mcm6 suggests that specific forms of mcm2-7 complexes may be used during different stages of development. This Xenopus laevis (African clawed frog) protein is Zygotic DNA replication licensing factor mcm3.